The following is a 405-amino-acid chain: Adenosylhomocysteinase (405 aa).

D113 and E138 together coordinate substrate. Residue 139–141 (TTT) coordinates NAD(+). Residues K168 and D172 each contribute to the substrate site. NAD(+)-binding positions include N173, 202–207 (GYGWCG), E225, N260, 281–283 (AGH), and N327.

The protein belongs to the adenosylhomocysteinase family. The cofactor is NAD(+).

It is found in the cytoplasm. It carries out the reaction S-adenosyl-L-homocysteine + H2O = L-homocysteine + adenosine. Its pathway is amino-acid biosynthesis; L-homocysteine biosynthesis; L-homocysteine from S-adenosyl-L-homocysteine: step 1/1. In terms of biological role, may play a key role in the regulation of the intracellular concentration of adenosylhomocysteine. The protein is Adenosylhomocysteinase of Archaeoglobus fulgidus (strain ATCC 49558 / DSM 4304 / JCM 9628 / NBRC 100126 / VC-16).